Reading from the N-terminus, the 164-residue chain is 3-hydroxyacyl-[acyl-carrier-protein] dehydratase FabZ (164 aa).

Histidine 70 is an active-site residue.

The protein belongs to the thioester dehydratase family. FabZ subfamily.

It localises to the cytoplasm. It catalyses the reaction a (3R)-hydroxyacyl-[ACP] = a (2E)-enoyl-[ACP] + H2O. In terms of biological role, involved in unsaturated fatty acids biosynthesis. Catalyzes the dehydration of short chain beta-hydroxyacyl-ACPs and long chain saturated and unsaturated beta-hydroxyacyl-ACPs. The sequence is that of 3-hydroxyacyl-[acyl-carrier-protein] dehydratase FabZ from Synechocystis sp. (strain ATCC 27184 / PCC 6803 / Kazusa).